The primary structure comprises 899 residues: Protein argonaute (899 aa).

The segment at 107 to 129 is disordered; sequence TQKPKRRGGRAGGMRGNRGGPST. A compositionally biased stretch (gly residues) spans 116-125; that stretch reads RAGGMRGNRG. A PAZ domain is found at 229–313; that stretch reads SMCELLNENR…KQDDYCNSVL (85 aa). The Piwi domain maps to 555 to 878; the sequence is LVVVVIPGPK…LSKFCGEILG (324 aa).

This sequence belongs to the argonaute family. Ago subfamily. As to quaternary structure, interacts with miR2. Highly specific binding to the mRNA m7G-cap. May be a component of the RNA-induced silencing complex (RISC), a sequence-specific, multicomponent nuclease that destroys or silences messenger RNAs homologous to the silencing trigger.

It localises to the cytoplasm. Functionally, plays an essential role in growth and, with Dicer, also involved in microRNA (miRNA)-mediated translational repression. The RNA interference pathway is implicated in antigenic variation having a role in regulation of variant-specific surface protein (VSP)-coding gene expression. Several VSP genes are transcribed but only transcripts encoding the VSP to be expressed accumulate. Antisense RNAs corresponding to the silenced VSP genes are detected. The chain is Protein argonaute from Giardia intestinalis (strain ATCC 50581 / GS clone H7) (Giardia lamblia).